Here is a 122-residue protein sequence, read N- to C-terminus: Large ribosomal subunit protein uL22 (122 aa).

Positions 103–122 (VEGKEMKSSKSHKKNQAEGK) are disordered.

The protein belongs to the universal ribosomal protein uL22 family. In terms of assembly, part of the 50S ribosomal subunit.

Functionally, this protein binds specifically to 23S rRNA; its binding is stimulated by other ribosomal proteins, e.g. L4, L17, and L20. It is important during the early stages of 50S assembly. It makes multiple contacts with different domains of the 23S rRNA in the assembled 50S subunit and ribosome. Its function is as follows. The globular domain of the protein is located near the polypeptide exit tunnel on the outside of the subunit, while an extended beta-hairpin is found that lines the wall of the exit tunnel in the center of the 70S ribosome. The sequence is that of Large ribosomal subunit protein uL22 from Helicobacter pylori (strain P12).